Reading from the N-terminus, the 276-residue chain is MVVKIGIIRCGNIGTSPVLDLLLDERADRPNIDVCVVGSGAKMNPDEIERAVPTMLEMDRDFVIFISPNPGAPGPAKARELLSEADVPAMIIGDAPGLRVKDEIEEQGLGYIIVKADPMIGARREFLDPTEMASFNSDVIKVLAFTGAYRVVQNTIDAMIADVEAGKAPELPQVVIDTDVAVEAAGYENPYAKAKAMAAYEIATKVADIDVKGCFMVQDPDKYIPIVASAHEMLAAAAKLAVEAREIEKANDTVLRTPHGKEGETLSKTDLLAKPE.

A disordered region spans residues Thr-257–Glu-276. Over residues His-259–Glu-276 the composition is skewed to basic and acidic residues.

This sequence belongs to the MTD family.

The catalysed reaction is 5,10-methylenetetrahydromethanopterin + oxidized coenzyme F420-(gamma-L-Glu)(n) + 2 H(+) = 5,10-methenyl-5,6,7,8-tetrahydromethanopterin + reduced coenzyme F420-(gamma-L-Glu)(n). The protein operates within one-carbon metabolism; methanogenesis from CO(2); 5,10-methylene-5,6,7,8-tetrahydromethanopterin from 5,10-methenyl-5,6,7,8-tetrahydromethanopterin (coenzyme F420 route): step 1/1. Its function is as follows. Catalyzes the reversible reduction of methenyl-H(4)MPT(+) to methylene-H(4)MPT. This is F420-dependent methylenetetrahydromethanopterin dehydrogenase (mtd) from Methanothermobacter thermautotrophicus (strain ATCC 29096 / DSM 1053 / JCM 10044 / NBRC 100330 / Delta H) (Methanobacterium thermoautotrophicum).